A 310-amino-acid chain; its full sequence is tRNA pseudouridine synthase B (310 aa).

The active-site Nucleophile is the Asp49.

This sequence belongs to the pseudouridine synthase TruB family. Type 1 subfamily.

The catalysed reaction is uridine(55) in tRNA = pseudouridine(55) in tRNA. In terms of biological role, responsible for synthesis of pseudouridine from uracil-55 in the psi GC loop of transfer RNAs. The sequence is that of tRNA pseudouridine synthase B from Rhizobium johnstonii (strain DSM 114642 / LMG 32736 / 3841) (Rhizobium leguminosarum bv. viciae).